Here is a 338-residue protein sequence, read N- to C-terminus: Inositol 2-dehydrogenase (338 aa).

This sequence belongs to the Gfo/Idh/MocA family. In terms of assembly, homotetramer.

It carries out the reaction myo-inositol + NAD(+) = scyllo-inosose + NADH + H(+). In terms of biological role, involved in the oxidation of myo-inositol (MI) to 2-keto-myo-inositol (2KMI or 2-inosose). This chain is Inositol 2-dehydrogenase, found in Azotobacter vinelandii (strain DJ / ATCC BAA-1303).